A 100-amino-acid chain; its full sequence is Small ribosomal subunit protein uS14c (100 aa).

It belongs to the universal ribosomal protein uS14 family. In terms of assembly, part of the 30S ribosomal subunit.

The protein localises to the plastid. Its subcellular location is the chloroplast. Binds 16S rRNA, required for the assembly of 30S particles. The protein is Small ribosomal subunit protein uS14c of Capsella bursa-pastoris (Shepherd's purse).